Here is a 311-residue protein sequence, read N- to C-terminus: MSKVSVFGGGAWGRALAFALAEKNEVRIISRRDISSLLEPLNQKLKTLNCTSIIQVSHKEALDAQYFVMAIATSALREWLAVADLPQKIKILCASKGIESGSGAFVSDIMEERIAHKSIAYLCGPSFASEVVHSLPCALVIHSRNLELSREFGTLMPHFIKTYASPDVVGGEVAGAYKNVIAIAGGICDGLAFGMNAKASLLARGLVEMSRFGEHFGAKMETFLGLSGAGDLFLTSNSTMSRNYRVGLGLAKGKAINEILKELGEVAEGVITAKAITEIGQRENIYTPIAREINLIINGKNVRESSKALMA.

Positions 12, 31, 32, and 96 each coordinate NADPH. K96, G124, and S126 together coordinate sn-glycerol 3-phosphate. A128 serves as a coordination point for NADPH. Sn-glycerol 3-phosphate contacts are provided by K178, D231, S241, R242, and N243. The active-site Proton acceptor is the K178. Position 242 (R242) interacts with NADPH. Residues V266 and E268 each contribute to the NADPH site.

The protein belongs to the NAD-dependent glycerol-3-phosphate dehydrogenase family.

The protein resides in the cytoplasm. The catalysed reaction is sn-glycerol 3-phosphate + NAD(+) = dihydroxyacetone phosphate + NADH + H(+). The enzyme catalyses sn-glycerol 3-phosphate + NADP(+) = dihydroxyacetone phosphate + NADPH + H(+). It participates in membrane lipid metabolism; glycerophospholipid metabolism. Catalyzes the reduction of the glycolytic intermediate dihydroxyacetone phosphate (DHAP) to sn-glycerol 3-phosphate (G3P), the key precursor for phospholipid synthesis. The protein is Glycerol-3-phosphate dehydrogenase [NAD(P)+] of Helicobacter hepaticus (strain ATCC 51449 / 3B1).